We begin with the raw amino-acid sequence, 419 residues long: GTPase Obg (419 aa).

Residues 1–158 (MIFIDTAEII…RRLRLELKLV (158 aa)) form the Obg domain. The region spanning 159–328 (AHVGLVGLPN…LVDVLFELIS (170 aa)) is the OBG-type G domain. GTP contacts are provided by residues 165-172 (GLPNAGKS), 190-194 (FTTRS), 211-214 (DVPG), 281-284 (NKID), and 309-311 (SAA). Mg(2+)-binding residues include serine 172 and threonine 192. Residues 344-419 (ELPPLPEDFS…VIHDKAFEIL (76 aa)) form the OCT domain.

This sequence belongs to the TRAFAC class OBG-HflX-like GTPase superfamily. OBG GTPase family. As to quaternary structure, monomer. It depends on Mg(2+) as a cofactor.

Its subcellular location is the cytoplasm. In terms of biological role, an essential GTPase which binds GTP, GDP and possibly (p)ppGpp with moderate affinity, with high nucleotide exchange rates and a fairly low GTP hydrolysis rate. Plays a role in control of the cell cycle, stress response, ribosome biogenesis and in those bacteria that undergo differentiation, in morphogenesis control. In Coprothermobacter proteolyticus (strain ATCC 35245 / DSM 5265 / OCM 4 / BT), this protein is GTPase Obg.